We begin with the raw amino-acid sequence, 193 residues long: Ion-translocating oxidoreductase complex subunit A (193 aa).

6 consecutive transmembrane segments (helical) span residues 5 to 25, 47 to 67, 72 to 92, 102 to 122, 134 to 154, and 171 to 191; these read LLLF…FLGL, FVMT…LIPL, LRTL…EMVV, LLGI…VALL, ALYG…FAAI, and AIAL…SGLV.

The protein belongs to the NqrDE/RnfAE family. The complex is composed of six subunits: RsxA, RsxB, RsxC, RsxD, RsxE and RsxG.

Its subcellular location is the cell inner membrane. In terms of biological role, part of a membrane-bound complex that couples electron transfer with translocation of ions across the membrane. Required to maintain the reduced state of SoxR. The sequence is that of Ion-translocating oxidoreductase complex subunit A from Salmonella arizonae (strain ATCC BAA-731 / CDC346-86 / RSK2980).